Reading from the N-terminus, the 464-residue chain is NADH-ubiquinone oxidoreductase chain 4 (464 aa).

The next 13 helical transmembrane spans lie at 1–21, 63–83, 98–118, 119–139, 152–172, 197–217, 227–247, 261–281, 288–308, 314–334, 355–375, 389–409, and 443–463; these read MMITLILFTTGIVMTTLVIPQ, SISAPLIALSCWLAPISLIAS, FIIIVIFIAGALIITFSALEL, LLFYVAFETTLIPTLILITRW, FMFYTLFGSLPLLISLIAIYI, IWWALSIIAFLIKMPIYGFHL, PVAGSMILAAILLKLGGYGLI, LSLALITFCSWGALVTSIICV, ALIAYSSVGHMSIVAAAIFSS, NGALILMIAYGLVSSDLFSLA, ILPLSTLWWLVMSAANLGLPP, LIAWSIWLFPIIGLATIFGAI, and LHTLPLILIIINPISALITWL.

It belongs to the complex I subunit 4 family.

It is found in the mitochondrion membrane. The enzyme catalyses a ubiquinone + NADH + 5 H(+)(in) = a ubiquinol + NAD(+) + 4 H(+)(out). Functionally, core subunit of the mitochondrial membrane respiratory chain NADH dehydrogenase (Complex I) that is believed to belong to the minimal assembly required for catalysis. Complex I functions in the transfer of electrons from NADH to the respiratory chain. The immediate electron acceptor for the enzyme is believed to be ubiquinone. This is NADH-ubiquinone oxidoreductase chain 4 (ND4) from Paracentrotus lividus (Common sea urchin).